Reading from the N-terminus, the 185-residue chain is Ribosome-recycling factor (185 aa).

Residues 138–179 (TLKRQEKNGDITEDEQRSLEKQVQKVTDDATKEIDKLADQKS) are compositionally biased toward basic and acidic residues. The tract at residues 138–185 (TLKRQEKNGDITEDEQRSLEKQVQKVTDDATKEIDKLADQKSQEITQG) is disordered.

It belongs to the RRF family.

It localises to the cytoplasm. In terms of biological role, responsible for the release of ribosomes from messenger RNA at the termination of protein biosynthesis. May increase the efficiency of translation by recycling ribosomes from one round of translation to another. This chain is Ribosome-recycling factor, found in Lactobacillus gasseri (strain ATCC 33323 / DSM 20243 / BCRC 14619 / CIP 102991 / JCM 1131 / KCTC 3163 / NCIMB 11718 / NCTC 13722 / AM63).